Reading from the N-terminus, the 352-residue chain is Homeobox protein Mohawk (352 aa).

Positions 19–54 (GASERERGGRPYSGVLDSPHARPEVGIPDGPPLKDN) are disordered. Residues 71 to 132 (VRHKRQALQD…NARRRLKNTV (62 aa)) constitute a DNA-binding region (homeobox; TALE-type). 2 disordered regions span residues 159–189 (VSSDDSCSEDGENPPRTHMNEGGYNTPVHHP) and 245–301 (TRQR…PSKD).

Belongs to the TALE/IRO homeobox family.

The protein localises to the nucleus. In terms of biological role, may act as a morphogenetic regulator of cell adhesion. The polypeptide is Homeobox protein Mohawk (MKX) (Homo sapiens (Human)).